A 130-amino-acid chain; its full sequence is Small ribosomal subunit protein uS9 (130 aa).

It belongs to the universal ribosomal protein uS9 family.

The chain is Small ribosomal subunit protein uS9 from Burkholderia multivorans (strain ATCC 17616 / 249).